The chain runs to 284 residues: MGPGKEKFALITGCGDGGIGHALANNFVQNGFIVIATLLPHESRTHLEHAKIHVIDLDVTKEDQMIPFRSTLEEITGGTLDVLVNNAGICYTMTAADTDVKQVEKMFAVNVFGPMRLVHHLHRMLIAAPRGVIVNIGSIGGVCPYVFGASYNATKAALHHWGNTLRVEMKPFGVHVVNIISGEVATNILKSDVRDNRTLPEDSVYAPLAQLFKDHVNRTPDAMSPDDYARGVVAMVQRRSLPAWFWHGNATGFIWTLDSFFPRTIWDWLFTRWFKLENLVGTQG.

Residues Ile11, Thr37, Asp58, Asn86, Tyr151, Lys155, Val184, and Thr186 each coordinate NADP(+). Catalysis depends on Tyr151, which acts as the Proton acceptor. Lys155 acts as the Lowers pKa of active site Tyr in catalysis.

The protein belongs to the short-chain dehydrogenases/reductases (SDR) family.

The protein operates within polyketide biosynthesis. Its function is as follows. Short-chain dehydrogenase; part of the gene cluster that mediates the biosynthesis of pyriculol and pyriculariol, two heptaketides that induce lesion formation upon application on rice leaves but are dispensable for pathogenicity. The highly reducing polyketide synthase synthesizes the heptaketide backbone of pyriculol and pyriculariol. Pyriculol and pyriculariol contain several hydroxyl moieties and double bonds, so it can be assumed that several reduction steps occur during biosynthesis. These reactions could be executed by PKS19 itself or partly by the tailoring enzymes OXR1, OXR2, RED1, RED2 or RED3, identified within the cluster. The FAD-linked oxidoreductase OXR1 is the only tailoring enzyme for which the function has been determined yet, and is involved in the oxidation of dihydropyriculol and dihydropyriculariol into pyriculol and pyriculariol, respectively. This chain is Short-chain dehydrogenase RED1, found in Pyricularia oryzae (strain 70-15 / ATCC MYA-4617 / FGSC 8958) (Rice blast fungus).